A 103-amino-acid polypeptide reads, in one-letter code: Putative septation protein SpoVG (103 aa).

Belongs to the SpoVG family.

Its function is as follows. Could be involved in septation. This Exiguobacterium sibiricum (strain DSM 17290 / CCUG 55495 / CIP 109462 / JCM 13490 / 255-15) protein is Putative septation protein SpoVG.